We begin with the raw amino-acid sequence, 212 residues long: Imidazole glycerol phosphate synthase subunit HisH (212 aa).

One can recognise a Glutamine amidotransferase type-1 domain in the interval 3–212; the sequence is SIAVVDYGMG…LLSNFLKWTP (210 aa). Residue Cys-82 is the Nucleophile of the active site. Active-site residues include His-192 and Glu-194.

In terms of assembly, heterodimer of HisH and HisF.

The protein localises to the cytoplasm. The catalysed reaction is 5-[(5-phospho-1-deoxy-D-ribulos-1-ylimino)methylamino]-1-(5-phospho-beta-D-ribosyl)imidazole-4-carboxamide + L-glutamine = D-erythro-1-(imidazol-4-yl)glycerol 3-phosphate + 5-amino-1-(5-phospho-beta-D-ribosyl)imidazole-4-carboxamide + L-glutamate + H(+). It carries out the reaction L-glutamine + H2O = L-glutamate + NH4(+). It participates in amino-acid biosynthesis; L-histidine biosynthesis; L-histidine from 5-phospho-alpha-D-ribose 1-diphosphate: step 5/9. In terms of biological role, IGPS catalyzes the conversion of PRFAR and glutamine to IGP, AICAR and glutamate. The HisH subunit catalyzes the hydrolysis of glutamine to glutamate and ammonia as part of the synthesis of IGP and AICAR. The resulting ammonia molecule is channeled to the active site of HisF. The protein is Imidazole glycerol phosphate synthase subunit HisH of Nitrosomonas europaea (strain ATCC 19718 / CIP 103999 / KCTC 2705 / NBRC 14298).